A 560-amino-acid polypeptide reads, in one-letter code: Formate--tetrahydrofolate ligase (560 aa).

Position 69-76 (69-76) interacts with ATP; sequence TPAGEGKS.

The protein belongs to the formate--tetrahydrofolate ligase family.

It catalyses the reaction (6S)-5,6,7,8-tetrahydrofolate + formate + ATP = (6R)-10-formyltetrahydrofolate + ADP + phosphate. The protein operates within one-carbon metabolism; tetrahydrofolate interconversion. The chain is Formate--tetrahydrofolate ligase from Listeria welshimeri serovar 6b (strain ATCC 35897 / DSM 20650 / CCUG 15529 / CIP 8149 / NCTC 11857 / SLCC 5334 / V8).